The primary structure comprises 309 residues: MAPSHWRLILNGKSTDNADLREAVGTLRKRGIQLDVRVTWEDGDAERYVSEAVADGVHTVVAAGGDGTLSEVAAALAHHERDAATLPSLGLVPLGTANDFATAANVPITPLDALTLIAERVAQPVDLLRIDAEHGPRWCANVASGGFGTQVTVETDEGLKKMLGGLAYLITGMSRLGRIDPIGARFNGPDFSWEGEFIALGLGNGRQAGGGQALCPEAVIDDGLLDVTIVPALDGEVAATLGTLVTGGKQAALERVAVRARVPWLEIVSNQPLTLNLDGEPETSRHFRIACVPARLRMHLPNDCPLLGR.

A DAGKc domain is found at 1 to 134 (MAPSHWRLIL…VDLLRIDAEH (134 aa)). Residues threonine 39, 65–71 (GDGTLSE), and threonine 96 contribute to the ATP site. Mg(2+) is bound by residues valine 219, aspartate 222, and leucine 224. Glutamate 280 functions as the Proton acceptor in the catalytic mechanism.

Belongs to the diacylglycerol/lipid kinase family. YegS lipid kinase subfamily. The cofactor is Mg(2+). Requires Ca(2+) as cofactor.

Its subcellular location is the cytoplasm. Functionally, probably phosphorylates lipids; the in vivo substrate is unknown. The polypeptide is Probable lipid kinase YegS-like (Xanthomonas oryzae pv. oryzae (strain MAFF 311018)).